Here is a 365-residue protein sequence, read N- to C-terminus: Chorismate synthase (365 aa).

Arg48 is an NADP(+) binding site. FMN-binding positions include 125–127 (RGS), Gly286, 301–305 (KPTPS), and Arg328.

It belongs to the chorismate synthase family. FMNH2 serves as cofactor.

The enzyme catalyses 5-O-(1-carboxyvinyl)-3-phosphoshikimate = chorismate + phosphate. Its pathway is metabolic intermediate biosynthesis; chorismate biosynthesis; chorismate from D-erythrose 4-phosphate and phosphoenolpyruvate: step 7/7. Catalyzes the anti-1,4-elimination of the C-3 phosphate and the C-6 proR hydrogen from 5-enolpyruvylshikimate-3-phosphate (EPSP) to yield chorismate, which is the branch point compound that serves as the starting substrate for the three terminal pathways of aromatic amino acid biosynthesis. This reaction introduces a second double bond into the aromatic ring system. This chain is Chorismate synthase, found in Methanosphaera stadtmanae (strain ATCC 43021 / DSM 3091 / JCM 11832 / MCB-3).